The sequence spans 2303 residues: Adenomatous polyposis coli protein 2 (2303 aa).

Residues 8–59 (YEQLVRQVEALKAENSHLRQELRDNSSHLSKLETETSGMKEVLKHLQGKLEQ) adopt a coiled-coil conformation. Disordered regions lie at residues 94–120 (PTLG…KDSF) and 247–270 (VPVD…QPGN). ARM repeat units follow at residues 302 to 341 (PESC…PGAK), 479 to 518 (ANKA…NLSW), 522 to 562 (INSK…NLSA), 566 to 609 (ENKA…NVSS), 615 to 654 (EDYR…NLSA), and 657 to 696 (ARDQ…NLLA). Disordered regions lie at residues 744-764 (KQGP…LRHL) and 816-835 (LART…DTSG). Residues 825-834 (GGKEAEKDTS) show a composition bias toward basic and acidic residues. Positions 840 to 864 (AAKAKAKLALAVARIDQLVEDISAL) form a coiled coil. Disordered regions lie at residues 867 to 908 (SSDD…AGSR), 953 to 986 (RRED…ATSA), 1069 to 1152 (RCSS…ENYV), and 1173 to 1228 (SPSI…EATQ). Residues 869–878 (DDSFSLSSGD) show a composition bias toward low complexity. Repeat 1 spans residues 1058 to 1077 (LAAQEGPLSLSRCSSLSSLS). A 5 X 20 AA approximate repeat of F-X-V-E-X-T-P-X-C-F-S-R-X-S-S-L-S-S-L-S region spans residues 1058 to 1587 (LAAQEGPLSL…SLSSSASSLS (530 aa)). The interval 1058–1587 (LAAQEGPLSL…SLSSSASSLS (530 aa)) is interaction with CTNNB1. A compositionally biased stretch (low complexity) spans 1069–1084 (RCSSLSSLSSAGRPGP). Residues 1088 to 1101 (GDLDDSDSSLEGLE) are compositionally biased toward acidic residues. A compositionally biased stretch (polar residues) spans 1143-1152 (TPSSSSENYV). Repeat unit 2 spans residues 1150–1169 (NYVQETPLVLSRCSSVSSLG). Over residues 1173–1186 (SPSIASSIPSEPCS) the composition is skewed to low complexity. Residues 1202–1212 (PGQTMPPSRSK) show a composition bias toward polar residues. Repeat unit 3 spans residues 1263 to 1282 (FTVEKPDENFSCASSLSALA). 5 disordered regions span residues 1307-1335 (GAGG…PRGA), 1382-1497 (PAQE…QSLC), 1510-1684 (YGND…LDSV), 1724-2031 (LSVG…RGRP), and 2046-2232 (LRAA…DVDG). The segment covering 1390–1410 (TDSAEGTPVNFSSAASLSDET) has biased composition (polar residues). Residues 1391–1410 (DSAEGTPVNFSSAASLSDET) form repeat 4. 2 stretches are compositionally biased toward basic and acidic residues: residues 1477–1489 (ADKD…RTRG) and 1537–1548 (FTRERPQGRKEA). Repeat 5 spans residues 1568-1587 (LIADETPPCYSLSSSASSLS). Residues 1578–1589 (SLSSSASSLSEP) show a composition bias toward low complexity. Phosphoserine occurs at positions 1585 and 1587. Basic residues predominate over residues 1638 to 1654 (PRRRPPVSGLRRRKPRA). Basic and acidic residues-rich tracts occupy residues 1655–1671 (TRLD…RGEE) and 1739–1755 (RQAE…EKRG). The span at 1819–1830 (APPCLAQPAAPA) shows a compositional bias: low complexity. Residues 1821 to 1900 (PCLAQPAAPA…PPVTQAAGAL (80 aa)) form a required for localization to microtubules and function in microtubule stabilization region. Residues 1851 to 1860 (ELATLSQPPR) show a composition bias toward polar residues. 5 stretches are compositionally biased toward low complexity: residues 1868 to 1886 (LAKT…SQPL), 1971 to 1984 (GLVR…SGSE), 2011 to 2026 (LSSA…GASP), 2049 to 2062 (APRQ…QRPP), and 2113 to 2123 (GAVPAAPASAD). Residues 2067–2144 (SPGERPARRT…PLPRVAAPGT (78 aa)) form an interaction with MAPRE1 and MAPRE3 region. Basic and acidic residues predominate over residues 2124–2135 (AARRSSDGEPRP). Residues 2200-2209 (KTNSSTSPSL) are compositionally biased toward polar residues.

It belongs to the adenomatous polyposis coli (APC) family. Interacts with PSRC1. Interacts with APC. Interacts with CTNNB1. Interacts with MAPRE1 and MAPRE3. Interacts with TP53BP. Interacts possibly with AXIN2. In terms of tissue distribution, widely expressed (at protein level). Specifically expressed in the CNS.

The protein resides in the cytoplasm. It is found in the cytoskeleton. The protein localises to the golgi apparatus. It localises to the perinuclear region. Its function is as follows. Stabilizes microtubules and may regulate actin fiber dynamics through the activation of Rho family GTPases. May also function in Wnt signaling by promoting the rapid degradation of CTNNB1. The chain is Adenomatous polyposis coli protein 2 from Homo sapiens (Human).